The chain runs to 297 residues: Phosphoribosylaminoimidazole-succinocarboxamide synthase (297 aa).

This sequence belongs to the SAICAR synthetase family.

The enzyme catalyses 5-amino-1-(5-phospho-D-ribosyl)imidazole-4-carboxylate + L-aspartate + ATP = (2S)-2-[5-amino-1-(5-phospho-beta-D-ribosyl)imidazole-4-carboxamido]succinate + ADP + phosphate + 2 H(+). It participates in purine metabolism; IMP biosynthesis via de novo pathway; 5-amino-1-(5-phospho-D-ribosyl)imidazole-4-carboxamide from 5-amino-1-(5-phospho-D-ribosyl)imidazole-4-carboxylate: step 1/2. The polypeptide is Phosphoribosylaminoimidazole-succinocarboxamide synthase (purC) (Mycobacterium leprae (strain TN)).